The following is a 363-amino-acid chain: 3-isopropylmalate dehydrogenase (363 aa).

79 to 92 lines the NAD(+) pocket; that stretch reads GPKWEHLPPNDQPE. The substrate site is built by R100, R110, R139, and D228. Positions 228, 252, and 256 each coordinate Mg(2+). Residue 286–298 coordinates NAD(+); that stretch reads GSAPDIAGKNIAN.

This sequence belongs to the isocitrate and isopropylmalate dehydrogenases family. LeuB type 1 subfamily. As to quaternary structure, homodimer. Mg(2+) is required as a cofactor. The cofactor is Mn(2+).

It localises to the cytoplasm. It carries out the reaction (2R,3S)-3-isopropylmalate + NAD(+) = 4-methyl-2-oxopentanoate + CO2 + NADH. The protein operates within amino-acid biosynthesis; L-leucine biosynthesis; L-leucine from 3-methyl-2-oxobutanoate: step 3/4. In terms of biological role, catalyzes the oxidation of 3-carboxy-2-hydroxy-4-methylpentanoate (3-isopropylmalate) to 3-carboxy-4-methyl-2-oxopentanoate. The product decarboxylates to 4-methyl-2 oxopentanoate. The polypeptide is 3-isopropylmalate dehydrogenase (Vibrio vulnificus (strain YJ016)).